The chain runs to 765 residues: 5-methyltetrahydropteroyltriglutamate--homocysteine methyltransferase (765 aa).

5-methyltetrahydropteroyltri-L-glutamate-binding positions include 18-21 and Lys114; that span reads REWK. L-homocysteine-binding positions include 437–439 and Glu490; that span reads IGS. L-methionine is bound by residues 437 to 439 and Glu490; that span reads IGS. Trp567 serves as a coordination point for 5-methyltetrahydropteroyltri-L-glutamate. Position 605 (Asp605) interacts with L-homocysteine. Asp605 is an L-methionine binding site. 5-methyltetrahydropteroyltri-L-glutamate is bound at residue Glu611. Zn(2+) contacts are provided by His647, Cys649, and Glu671. His700 acts as the Proton donor in catalysis. Cys732 is a binding site for Zn(2+).

It belongs to the vitamin-B12 independent methionine synthase family. Zn(2+) serves as cofactor.

It carries out the reaction 5-methyltetrahydropteroyltri-L-glutamate + L-homocysteine = tetrahydropteroyltri-L-glutamate + L-methionine. Its pathway is amino-acid biosynthesis; L-methionine biosynthesis via de novo pathway; L-methionine from L-homocysteine (MetE route): step 1/1. In terms of biological role, catalyzes the transfer of a methyl group from 5-methyltetrahydrofolate to homocysteine resulting in methionine formation. The chain is 5-methyltetrahydropteroyltriglutamate--homocysteine methyltransferase from Listeria welshimeri serovar 6b (strain ATCC 35897 / DSM 20650 / CCUG 15529 / CIP 8149 / NCTC 11857 / SLCC 5334 / V8).